The following is a 471-amino-acid chain: Phosphoglycerate kinase (471 aa).

Substrate-binding positions include 24-26, R41, 64-67, R127, and R169; these read DFN and HLSR. ATP contacts are provided by residues K220, G307, E338, and 368-371; that span reads GGDS. A disordered region spans residues 417 to 471; sequence KVEAVKEKTTTTTESASKEKSSTAKTASKPATSKTTAAKKPAEKKPAAKKPAAKK. Over residues 439–455 the composition is skewed to low complexity; it reads TAKTASKPATSKTTAAK.

The protein belongs to the phosphoglycerate kinase family. In terms of assembly, monomer.

It is found in the cytoplasm. It carries out the reaction (2R)-3-phosphoglycerate + ATP = (2R)-3-phospho-glyceroyl phosphate + ADP. It functions in the pathway carbohydrate degradation; glycolysis; pyruvate from D-glyceraldehyde 3-phosphate: step 2/5. The chain is Phosphoglycerate kinase from Malacoplasma penetrans (strain HF-2) (Mycoplasma penetrans).